The primary structure comprises 356 residues: Cdc42 effector protein 4 (356 aa).

Lys5 is modified (N6-methyllysine). Phosphoserine is present on Ser18. The CRIB domain occupies 27 to 41 (ISAPLGDFRHTMHVG). A disordered region spans residues 51 to 102 (SFLNSKAGEPDGESLDEQPSSSSSKRSLLSRKFRGSKRSQSVTRGEREQRDM). The residue at position 64 (Ser64) is a Phosphoserine. A compositionally biased stretch (basic residues) spans 78–87 (LLSRKFRGSK). Phosphoserine occurs at positions 105, 109, and 118. 2 disordered regions span residues 122-182 (LNEK…LDEQ) and 257-356 (VAAP…EIRV). Basic and acidic residues predominate over residues 123–132 (NEKEAAEKGT). A compositionally biased stretch (low complexity) spans 133 to 143 (SKLPKSLSSSP). Phosphoserine is present on residues Ser138, Ser140, Ser142, Ser174, Ser292, and Ser295. Low complexity predominate over residues 287-315 (AAAAPSPGSARSMGSHTTRDSSSLSSCTS). Residues 318–344 (LEERSPAFRGPDRARAAVSRQPDKEFS) are compositionally biased toward basic and acidic residues. Residues 345–356 (FMDEEEEDEIRV) are compositionally biased toward acidic residues.

It belongs to the BORG/CEP family. As to quaternary structure, interacts with CDC42 and RHOQ, in a GTP-dependent manner. Not detected in any of the adult tissues tested. May be expressed only in fetal or embryonic tissues.

It is found in the endomembrane system. It localises to the cytoplasm. Its subcellular location is the cytoskeleton. Probably involved in the organization of the actin cytoskeleton. May act downstream of CDC42 to induce actin filament assembly leading to cell shape changes. Induces pseudopodia formation, when overexpressed in fibroblasts. The sequence is that of Cdc42 effector protein 4 (CDC42EP4) from Homo sapiens (Human).